We begin with the raw amino-acid sequence, 276 residues long: Formamidopyrimidine-DNA glycosylase (276 aa).

Pro2 serves as the catalytic Schiff-base intermediate with DNA. Catalysis depends on Glu3, which acts as the Proton donor. Lys58 acts as the Proton donor; for beta-elimination activity in catalysis. The DNA site is built by His92, Arg111, and Lys154. An FPG-type zinc finger spans residues 239–273; sequence QVYGHVGEPCPVCGTKFEKIKVNGRGTTFCPHCQV. Arg263 (proton donor; for delta-elimination activity) is an active-site residue.

The protein belongs to the FPG family. As to quaternary structure, monomer. Requires Zn(2+) as cofactor.

The catalysed reaction is Hydrolysis of DNA containing ring-opened 7-methylguanine residues, releasing 2,6-diamino-4-hydroxy-5-(N-methyl)formamidopyrimidine.. It carries out the reaction 2'-deoxyribonucleotide-(2'-deoxyribose 5'-phosphate)-2'-deoxyribonucleotide-DNA = a 3'-end 2'-deoxyribonucleotide-(2,3-dehydro-2,3-deoxyribose 5'-phosphate)-DNA + a 5'-end 5'-phospho-2'-deoxyribonucleoside-DNA + H(+). In terms of biological role, involved in base excision repair of DNA damaged by oxidation or by mutagenic agents. Acts as a DNA glycosylase that recognizes and removes damaged bases. Has a preference for oxidized purines, such as 7,8-dihydro-8-oxoguanine (8-oxoG). Has AP (apurinic/apyrimidinic) lyase activity and introduces nicks in the DNA strand. Cleaves the DNA backbone by beta-delta elimination to generate a single-strand break at the site of the removed base with both 3'- and 5'-phosphates. The protein is Formamidopyrimidine-DNA glycosylase of Lactobacillus helveticus (strain DPC 4571).